A 140-amino-acid polypeptide reads, in one-letter code: MAGWQSYVDNLMCDGCCQEAAIVGYCDAKYVWAATAGGVFQSITPVEIDMIVGKDREGFFTNGLTLGAKKCSVIRDSLYVDGDCTMDIRTKSQGGEPTYNVAVGRAGRVLVFVMGKEGVHGGGLNKKAYSMAKYLRDSGF.

Position 2 is an N-acetylalanine (alanine 2).

The protein belongs to the profilin family. Occurs in many kinds of cells as a complex with monomeric actin in a 1:1 ratio. Interacts with PFN2. Interacts with ACTMAP (via N-terminus); the interaction may facilitate efficient cleavage of the acetylated N-terminus of immature actin by ACTMAP.

It localises to the cytoplasm. Its subcellular location is the cytoskeleton. Binds to actin and affects the structure of the cytoskeleton. At high concentrations, profilin prevents the polymerization of actin, whereas it enhances it at low concentrations. By binding to PIP2, it inhibits the formation of IP3 and DG. This chain is Profilin-2 (PFN2), found in Bos taurus (Bovine).